The primary structure comprises 121 residues: UPF0102 protein Mvan_2202 (121 aa).

It belongs to the UPF0102 family.

This is UPF0102 protein Mvan_2202 from Mycolicibacterium vanbaalenii (strain DSM 7251 / JCM 13017 / BCRC 16820 / KCTC 9966 / NRRL B-24157 / PYR-1) (Mycobacterium vanbaalenii).